The following is a 475-amino-acid chain: Rho GTPase-activating protein 15 (475 aa).

Polar residues predominate over residues 1–22 (MQKSTNSDTSVETLNSTRQGTG). The segment at 1 to 23 (MQKSTNSDTSVETLNSTRQGTGA) is disordered. Phosphoserine is present on residues serine 43, serine 103, serine 196, serine 199, and serine 243. Positions 79 to 189 (MVEKEGYLQK…WFHAIKNAID (111 aa)) constitute a PH domain. The Rho-GAP domain maps to 281 to 470 (SHLHKVCERE…LMLSEYSKIF (190 aa)).

Expressed in lung, liver and lymphoid cells.

It localises to the cytoplasm. It is found in the membrane. Its function is as follows. GTPase activator for the Rho-type GTPases by converting them to an inactive GDP-bound state. Has activity toward RAC1. Overexpression results in an increase in actin stress fibers and cell contraction. The chain is Rho GTPase-activating protein 15 (ARHGAP15) from Homo sapiens (Human).